We begin with the raw amino-acid sequence, 258 residues long: L-rhamnose-1-dehydrogenase (258 aa).

NADP(+)-binding residues include Ile19, Asp68, and Asn95. Catalysis depends on proton donor residues Ser147 and Tyr161. NADP(+)-binding residues include Tyr161, Lys165, Ile194, and Thr196. Lys165 acts as the Lowers pKa of active site Tyr in catalysis.

Belongs to the short-chain dehydrogenases/reductases (SDR) family.

It carries out the reaction L-rhamnofuranose + NAD(+) = L-rhamnono-1,4-lactone + NADH + H(+). Its function is as follows. NAD-dependent dehydrogenase that has high activity with L-rhamnose and L-lyxose, and shows only low activity with L-mannose. Has no activity with NADP. Catalyzes the first step in an alternative pathway for rhamnose utilization that does not involve phosphorylated intermediates. The polypeptide is L-rhamnose-1-dehydrogenase (DHG2) (Scheffersomyces stipitis (strain ATCC 58785 / CBS 6054 / NBRC 10063 / NRRL Y-11545) (Yeast)).